A 414-amino-acid chain; its full sequence is Serine hydroxymethyltransferase (414 aa).

(6S)-5,6,7,8-tetrahydrofolate contacts are provided by residues Leu-117 and 121 to 123; that span reads GHL. N6-(pyridoxal phosphate)lysine is present on Lys-226. 349–351 contributes to the (6S)-5,6,7,8-tetrahydrofolate binding site; that stretch reads SPF.

It belongs to the SHMT family. In terms of assembly, homodimer. Requires pyridoxal 5'-phosphate as cofactor.

The protein localises to the cytoplasm. It catalyses the reaction (6R)-5,10-methylene-5,6,7,8-tetrahydrofolate + glycine + H2O = (6S)-5,6,7,8-tetrahydrofolate + L-serine. It participates in one-carbon metabolism; tetrahydrofolate interconversion. The protein operates within amino-acid biosynthesis; glycine biosynthesis; glycine from L-serine: step 1/1. Functionally, catalyzes the reversible interconversion of serine and glycine with tetrahydrofolate (THF) serving as the one-carbon carrier. This reaction serves as the major source of one-carbon groups required for the biosynthesis of purines, thymidylate, methionine, and other important biomolecules. Also exhibits THF-independent aldolase activity toward beta-hydroxyamino acids, producing glycine and aldehydes, via a retro-aldol mechanism. In Desulfovibrio desulfuricans (strain ATCC 27774 / DSM 6949 / MB), this protein is Serine hydroxymethyltransferase.